We begin with the raw amino-acid sequence, 347 residues long: UDP-3-O-acylglucosamine N-acyltransferase (347 aa).

His241 serves as the catalytic Proton acceptor.

This sequence belongs to the transferase hexapeptide repeat family. LpxD subfamily. As to quaternary structure, homotrimer.

The enzyme catalyses a UDP-3-O-[(3R)-3-hydroxyacyl]-alpha-D-glucosamine + a (3R)-hydroxyacyl-[ACP] = a UDP-2-N,3-O-bis[(3R)-3-hydroxyacyl]-alpha-D-glucosamine + holo-[ACP] + H(+). It participates in bacterial outer membrane biogenesis; LPS lipid A biosynthesis. Functionally, catalyzes the N-acylation of UDP-3-O-acylglucosamine using 3-hydroxyacyl-ACP as the acyl donor. Is involved in the biosynthesis of lipid A, a phosphorylated glycolipid that anchors the lipopolysaccharide to the outer membrane of the cell. The sequence is that of UDP-3-O-acylglucosamine N-acyltransferase from Neisseria gonorrhoeae (strain NCCP11945).